The following is a 174-amino-acid chain: Large ribosomal subunit protein uL16 (174 aa).

Belongs to the universal ribosomal protein uL16 family.

This chain is Large ribosomal subunit protein uL16, found in Archaeoglobus fulgidus (strain ATCC 49558 / DSM 4304 / JCM 9628 / NBRC 100126 / VC-16).